We begin with the raw amino-acid sequence, 179 residues long: Natural killer cells antigen CD94 (179 aa).

Topologically, residues 1–10 are cytoplasmic; the sequence is MAVSRITRWR. Residues 11-31 form a helical; Signal-anchor for type II membrane protein membrane-spanning segment; it reads LMSVIFGIKCLFLMVTLGVLL. Residues 32–179 are Extracellular-facing; the sequence is INSFTIQNIQ…NRYICKKLPI (148 aa). Cystine bridges form between C58/C70, C61/C72, C89/C174, and C152/C166. The C-type lectin domain occupies 68–175; that stretch reads HQCNCYFISK…CENKNRYICK (108 aa). N-linked (GlcNAc...) asparagine glycans are attached at residues N93 and N109.

In terms of assembly, can form disulfide-bonded heterodimer with NKG2 family members KLRC1 and KLRC2. KLRD1-KLRC1 heterodimer interacts with peptide-bound MHC-E-B2M heterotrimeric complex. KLRD1 plays a prominent role in directly interacting with MHC-E. KLRD1-KLRC1 interacts with much higher affinity with peptide-bound MHC-E-B2M than KLRD1-KLRC2. Interacts with the adapter protein TYROBP/DAP12; this interaction is required for cell surface expression and cell activation.

It is found in the cell membrane. Immune receptor involved in self-nonself discrimination. In complex with KLRC1 or KLRC2 on cytotoxic and regulatory lymphocyte subsets, recognizes non-classical major histocompatibility (MHC) class Ib molecule MHC-E loaded with self-peptides derived from the signal sequence of classical MHC class Ia and non-classical MHC class Ib molecules. Enables cytotoxic cells to monitor the expression of MHC class I molecules in healthy cells and to tolerate self. Primarily functions as a ligand binding subunit as it lacks the capacity to signal. In terms of biological role, KLRD1-KLRC1 acts as an immune inhibitory receptor. Key inhibitory receptor on natural killer (NK) cells that regulates their activation and effector functions. Dominantly counteracts T cell receptor signaling on a subset of memory/effector CD8-positive T cells as part of an antigen-driven response to avoid autoimmunity. On intraepithelial CD8-positive gamma-delta regulatory T cells triggers TGFB1 secretion, which in turn limits the cytotoxic programming of intraepithelial CD8-positive alpha-beta T cells, distinguishing harmless from pathogenic antigens. In MHC-E-rich tumor microenvironment, acts as an immune inhibitory checkpoint and may contribute to progressive loss of effector functions of NK cells and tumor-specific T cells, a state known as cell exhaustion. Upon MHC-E-peptide binding, transmits intracellular signals through KLRC1 immunoreceptor tyrosine-based inhibition motifs (ITIMs) by recruiting INPP5D/SHIP-1 and INPPL1/SHIP-2 tyrosine phosphatases to ITIMs, and ultimately opposing signals transmitted by activating receptors through dephosphorylation of proximal signaling molecules. Its function is as follows. KLRD1-KLRC2 acts as an immune activating receptor. On cytotoxic lymphocyte subsets recognizes MHC-E loaded with signal sequence-derived peptides from non-classical MHC class Ib MHC-G molecules, likely playing a role in the generation and effector functions of adaptive NK cells and in maternal-fetal tolerance during pregnancy. Regulates the effector functions of terminally differentiated cytotoxic lymphocyte subsets, and in particular may play a role in adaptive NK cell response to viral infection. Upon MHC-E-peptide binding, transmits intracellular signals via the adapter protein TYROBP/DAP12, triggering the phosphorylation of proximal signaling molecules and cell activation. The protein is Natural killer cells antigen CD94 (Klrd1) of Mus musculus (Mouse).